Consider the following 493-residue polypeptide: Dipeptide and tripeptide permease B (493 aa).

The Cytoplasmic portion of the chain corresponds to 1–27 (MERSTPTGLLQQPKPFFMIFFVELWER). A helical membrane pass occupies residues 28–48 (FGYYGVQGILAVFFVQQLGFS). Topologically, residues 49 to 52 (QEQA) are periplasmic. The chain crosses the membrane as a helical span at residues 53-73 (FVTFGAFAALVYGLISIGGYV). Residues 74–82 (GDHLLGTKR) are Cytoplasmic-facing. A helical transmembrane segment spans residues 83–103 (TMVLGAVVLAAGYFATGLSLY). Topologically, residues 104 to 106 (QPN) are periplasmic. The chain crosses the membrane as a helical span at residues 107-127 (LIFFALGTIAVGNGLFKANPA). The Cytoplasmic portion of the chain corresponds to 128–146 (SLLSKCYPPKDPRLDGAFT). A helical transmembrane segment spans residues 147-167 (LFYMSINIGSLLSLSLAPVIA). The Periplasmic portion of the chain corresponds to 168 to 169 (ER). A helical membrane pass occupies residues 170-190 (FGYTVTYYLCGIGLIFALLVY). Residues 191-212 (FCCRHMVRHIGSEPDTKPLNWR) lie on the Cytoplasmic side of the membrane. Helical transmembrane passes span 213-233 (NLLL…WLMN) and 234-254 (HVFI…FIFF). Topologically, residues 255–267 (REASKQDRLGRNK) are cytoplasmic. Residues 268-288 (MFVAFILMIEAIVFYVLYAQM) form a helical membrane-spanning segment. The Periplasmic portion of the chain corresponds to 289–311 (PTSLNFFAINNVHHEILGFSINP). The chain crosses the membrane as a helical span at residues 312-332 (VSFQALNPFWVVVASPILASI). Residues 333–350 (YTRLGSQNRDLSMPAKFT) lie on the Cytoplasmic side of the membrane. The helical transmembrane segment at 351-371 (LGMFLCSLGFLTAAAAGMWFA) threads the bilayer. Over 372–379 (DAQGLTSP) the chain is Periplasmic. Residues 380-400 (WFIVLVYLFQSLGELMISALG) traverse the membrane as a helical segment. The Cytoplasmic segment spans residues 401–424 (LAMVAALVPQYLMGFILGMWFLTQ). Residues 425-445 (AASFLIGGYVATFTATPEGMT) traverse the membrane as a helical segment. Over 446–456 (DPLETLPIYTD) the chain is Periplasmic. The helical transmembrane segment at 457 to 477 (VFGKIGMVTLVIALVMALLIP) threads the bilayer. Topologically, residues 478–493 (WLNRMINSSAAEDAVA) are cytoplasmic.

Belongs to the major facilitator superfamily. Proton-dependent oligopeptide transporter (POT/PTR) (TC 2.A.17) family. DtpB subfamily.

Its subcellular location is the cell inner membrane. Its function is as follows. Proton-dependent permease that transports di- and tripeptides. The chain is Dipeptide and tripeptide permease B from Yersinia enterocolitica serotype O:8 / biotype 1B (strain NCTC 13174 / 8081).